Here is a 746-residue protein sequence, read N- to C-terminus: UvrABC system protein C (746 aa).

The 80-residue stretch at 18 to 97 folds into the GIY-YIG domain; the sequence is AKPGVYKWRD…IKEFDPRFNV (80 aa). A UVR domain is found at 211–246; the sequence is RPYIAQLTRDMKEASAELEFEKAARLRDQIQMLETV. Positions 557 to 577 are disordered; the sequence is ANGNDNGEGGSDISGKGHAVP.

The protein belongs to the UvrC family. Interacts with UvrB in an incision complex.

The protein resides in the cytoplasm. Its function is as follows. The UvrABC repair system catalyzes the recognition and processing of DNA lesions. UvrC both incises the 5' and 3' sides of the lesion. The N-terminal half is responsible for the 3' incision and the C-terminal half is responsible for the 5' incision. This chain is UvrABC system protein C, found in Bifidobacterium longum (strain NCC 2705).